The chain runs to 102 residues: Large ribosomal subunit protein bL21 (102 aa).

It belongs to the bacterial ribosomal protein bL21 family. As to quaternary structure, part of the 50S ribosomal subunit. Contacts protein L20.

In terms of biological role, this protein binds to 23S rRNA in the presence of protein L20. The chain is Large ribosomal subunit protein bL21 from Bacillus anthracis (strain A0248).